Reading from the N-terminus, the 496-residue chain is Omega-crystallin (496 aa).

The protein belongs to the aldehyde dehydrogenase family. In terms of tissue distribution, lens.

Omega-crystallins are structural components of squids and octopi eye lens. Contains relatively little if any DHAL activity. The protein is Omega-crystallin of Enteroctopus dofleini (North Pacific giant octopus).